A 166-amino-acid chain; its full sequence is Vasopressin-neurophysin 2-copeptin (166 aa).

A signal peptide spans 1-19 (MPDATLPACFLGLLALTSA). A disulfide bond links Cys20 and Cys25. Residue Gly28 is modified to Glycine amide. Disulfide bonds link Cys41-Cys85, Cys44-Cys58, Cys52-Cys75, Cys59-Cys65, Cys92-Cys104, Cys98-Cys116, and Cys105-Cys110. Asn133 is a glycosylation site (N-linked (GlcNAc...) asparagine).

This sequence belongs to the vasopressin/oxytocin family. In terms of assembly, interacts with vasopressin receptors V1bR/AVPR1B (Ki=85 pM), V1aR/AVPR1A (Ki=0.6 nM) and V2R/AVPR2 (Ki=4.9 nM). Interacts with oxytocin receptor (OXTR) (Ki=110 nM). In terms of processing, a shorter neurophysin molecule (32-123) is called neurophysin-I and is derived from the complete protein (called neurophysin III) by proteolytic degradation (in vivo or after extraction).

The protein localises to the secreted. Functionally, neurophysin 2 specifically binds vasopressin. In terms of biological role, vasopressin has a direct antidiuretic action on the kidney, it also causes vasoconstriction of the peripheral vessels. Acts by binding to vasopressin receptors (V1bR/AVPR1B, V1aR/AVPR1A, and V2R/AVPR2). The chain is Vasopressin-neurophysin 2-copeptin (AVP) from Sus scrofa (Pig).